Here is a 344-residue protein sequence, read N- to C-terminus: Phenylalanine--tRNA ligase alpha subunit (344 aa).

Glu256 is a binding site for Mg(2+).

Belongs to the class-II aminoacyl-tRNA synthetase family. Phe-tRNA synthetase alpha subunit type 1 subfamily. As to quaternary structure, tetramer of two alpha and two beta subunits. It depends on Mg(2+) as a cofactor.

It is found in the cytoplasm. It catalyses the reaction tRNA(Phe) + L-phenylalanine + ATP = L-phenylalanyl-tRNA(Phe) + AMP + diphosphate + H(+). This chain is Phenylalanine--tRNA ligase alpha subunit, found in Geobacillus kaustophilus (strain HTA426).